The primary structure comprises 198 residues: Penicillin-binding protein activator LpoB (198 aa).

The N-terminal stretch at methionine 1–glycine 20 is a signal peptide. The N-palmitoyl cysteine moiety is linked to residue cysteine 21. Residue cysteine 21 is the site of S-diacylglycerol cysteine attachment. The tract at residues proline 28 to glutamine 62 is disordered. Residues proline 30–methionine 61 are compositionally biased toward pro residues.

This sequence belongs to the LpoB family. In terms of assembly, interacts with PBP1b.

The protein resides in the cell outer membrane. Its function is as follows. Regulator of peptidoglycan synthesis that is essential for the function of penicillin-binding protein 1B (PBP1b). This chain is Penicillin-binding protein activator LpoB, found in Erwinia amylovora (strain CFBP1430).